The following is a 307-amino-acid chain: Trehalose transport system permease protein SugA (307 aa).

The next 6 helical transmembrane spans lie at 25 to 45 (LAFM…AYPI), 89 to 109 (LAIT…LALV), 123 to 143 (AVLI…YYAW), 168 to 188 (LGIV…LLLL), 217 to 237 (ILPM…LDAF), and 272 to 292 (LGSA…FIFI). The region spanning 85–291 (LAVTLAITAV…GCVAVIAFIF (207 aa)) is the ABC transmembrane type-1 domain.

Belongs to the binding-protein-dependent transport system permease family. The complex is composed of two ATP-binding proteins (SugC), two transmembrane proteins (Suga and SugB) and a solute-binding protein (LpqY).

Its subcellular location is the cell inner membrane. Its function is as follows. Part of the ABC transporter complex LpqY-SugA-SugB-SugC, which is highly specific for uptake of trehalose. Involved in the recycling of extracellular trehalose released from trehalose-containing molecules synthesized by M.tuberculosis. Trehalose uptake is essential for virulence. Probably responsible for the translocation of the substrate across the membrane. This Mycobacterium tuberculosis (strain CDC 1551 / Oshkosh) protein is Trehalose transport system permease protein SugA (sugA).